The following is an 800-amino-acid chain: DNA topoisomerase 4 subunit A (800 aa).

The Topo IIA-type catalytic domain occupies 31 to 496; the sequence is LPDVRDGLKP…ISEIKIDKEV (466 aa). The active-site O-(5'-phospho-DNA)-tyrosine intermediate is the Y119.

It belongs to the type II topoisomerase GyrA/ParC subunit family. ParC type 2 subfamily. Heterotetramer composed of ParC and ParE.

Its subcellular location is the cell membrane. The enzyme catalyses ATP-dependent breakage, passage and rejoining of double-stranded DNA.. Its function is as follows. Topoisomerase IV is essential for chromosome segregation. It relaxes supercoiled DNA. Performs the decatenation events required during the replication of a circular DNA molecule. The chain is DNA topoisomerase 4 subunit A from Staphylococcus epidermidis (strain ATCC 12228 / FDA PCI 1200).